The following is a 217-amino-acid chain: Uracil-DNA glycosylase (217 aa).

The Proton acceptor role is filled by Asp62.

It belongs to the uracil-DNA glycosylase (UDG) superfamily. UNG family.

Its subcellular location is the cytoplasm. It carries out the reaction Hydrolyzes single-stranded DNA or mismatched double-stranded DNA and polynucleotides, releasing free uracil.. Its function is as follows. Excises uracil residues from the DNA which can arise as a result of misincorporation of dUMP residues by DNA polymerase or due to deamination of cytosine. The sequence is that of Uracil-DNA glycosylase from Streptococcus uberis (strain ATCC BAA-854 / 0140J).